The primary structure comprises 119 residues: Translation initiation factor 1A (119 aa).

The interval 1–24 is disordered; the sequence is MSEDDVDNSVKDFESGEENEESIG. In terms of domain architecture, S1-like spans 24-98; the sequence is GRVILPNKKK…EKADVVYRYT (75 aa).

It belongs to the eIF-1A family.

In terms of biological role, seems to be required for maximal rate of protein biosynthesis. Enhances ribosome dissociation into subunits and stabilizes the binding of the initiator Met-tRNA(I) to 40 S ribosomal subunits. The polypeptide is Translation initiation factor 1A (eIF1A) (Thermoplasma acidophilum (strain ATCC 25905 / DSM 1728 / JCM 9062 / NBRC 15155 / AMRC-C165)).